We begin with the raw amino-acid sequence, 379 residues long: Bifunctional enzyme IspD/IspF (379 aa).

The 2-C-methyl-D-erythritol 4-phosphate cytidylyltransferase stretch occupies residues 1–223 (MTVAVIIVAA…RERKGLTMDV (223 aa)). The tract at residues 224 to 379 (RLGNGYDVHA…SIATVTLIGA (156 aa)) is 2-C-methyl-D-erythritol 2,4-cyclodiphosphate synthase. A divalent metal cation is bound by residues Asp-230 and His-232. 4-CDP-2-C-methyl-D-erythritol 2-phosphate-binding positions include 230 to 232 (DVH) and 256 to 257 (HS). Residue His-264 coordinates a divalent metal cation. 4-CDP-2-C-methyl-D-erythritol 2-phosphate-binding positions include 278 to 280 (DIG), 354 to 357 (TTSE), Phe-361, and Arg-364.

In the N-terminal section; belongs to the IspD/TarI cytidylyltransferase family. IspD subfamily. The protein in the C-terminal section; belongs to the IspF family. The cofactor is a divalent metal cation.

It catalyses the reaction 2-C-methyl-D-erythritol 4-phosphate + CTP + H(+) = 4-CDP-2-C-methyl-D-erythritol + diphosphate. The enzyme catalyses 4-CDP-2-C-methyl-D-erythritol 2-phosphate = 2-C-methyl-D-erythritol 2,4-cyclic diphosphate + CMP. It functions in the pathway isoprenoid biosynthesis; isopentenyl diphosphate biosynthesis via DXP pathway; isopentenyl diphosphate from 1-deoxy-D-xylulose 5-phosphate: step 2/6. Its pathway is isoprenoid biosynthesis; isopentenyl diphosphate biosynthesis via DXP pathway; isopentenyl diphosphate from 1-deoxy-D-xylulose 5-phosphate: step 4/6. Functionally, bifunctional enzyme that catalyzes the formation of 4-diphosphocytidyl-2-C-methyl-D-erythritol from CTP and 2-C-methyl-D-erythritol 4-phosphate (MEP) (IspD), and catalyzes the conversion of 4-diphosphocytidyl-2-C-methyl-D-erythritol 2-phosphate (CDP-ME2P) to 2-C-methyl-D-erythritol 2,4-cyclodiphosphate (ME-CPP) with a corresponding release of cytidine 5-monophosphate (CMP) (IspF). The chain is Bifunctional enzyme IspD/IspF from Rhodobacter capsulatus (strain ATCC BAA-309 / NBRC 16581 / SB1003).